Reading from the N-terminus, the 466-residue chain is MPHSWDYDAIVIGSGPGGEGAAMGLVKQGARVAVIERYHNVGGGCTHWGTIPSKALRHAVSRIIEFNQNPLYSDHSRLLRSSFADILNHADNVINQQTRMRQGFYERNHCEILQGNAHFVDENTLALECHDGTVETLTAEKFVIACGSRPYHPADVDFAHPRIYDSDSILSLHHEPRHVIIYGAGVIGCEYASIFRGMDVKVDLINTRDRLLAFLDQEMSDSLSYHFWNSGVVIRHNEEYEKIEGCDDGVIMHLKSGKKLKADCLLYANGRTGNTDSLALGNIGLETDSRGQLKVNSMYQTALPHIYAVGDVIGYPSLASAAYDQGRIAAQALVKGEATAHLIEDIPTGIYTIPEISSVGKTEQQLTAMKVPYEVGRAQFKHLARAQIVGMNVGTLKILFHRETKEILGIHCFGERAAEIIHIGQAIMEQKGGGNTIEYFVNTTFNYPTMAEAYRVAALNGLNRLF.

36–45 (ERYHNVGGGC) contacts FAD.

The protein belongs to the class-I pyridine nucleotide-disulfide oxidoreductase family. FAD is required as a cofactor.

It localises to the cytoplasm. The catalysed reaction is NAD(+) + NADPH = NADH + NADP(+). Conversion of NADPH, generated by peripheral catabolic pathways, to NADH, which can enter the respiratory chain for energy generation. This Citrobacter koseri (strain ATCC BAA-895 / CDC 4225-83 / SGSC4696) protein is Soluble pyridine nucleotide transhydrogenase.